Consider the following 93-residue polypeptide: Putative defensin-like protein 283 (93 aa).

The first 24 residues, 1–24 (MTKIGFYLATYATIYIILSPGLLA), serve as a signal peptide directing secretion. Cystine bridges form between C43–C83, C66–C90, and C72–C92.

The protein belongs to the DEFL family.

The protein localises to the secreted. The polypeptide is Putative defensin-like protein 283 (Arabidopsis thaliana (Mouse-ear cress)).